The following is a 1155-amino-acid chain: Probable translation initiation factor IF-2 (1155 aa).

The DOD-type homing endonuclease domain maps to 237 to 367 (FAGVMFGDGC…LSILLLRFEI (131 aa)). Residues 561-781 (TTETHNFIAN…VAGLAQKFLE (221 aa)) enclose the tr-type G domain. Residues 634 to 638 (DTPGH) and 688 to 691 (NKID) contribute to the GTP site.

The protein belongs to the TRAFAC class translation factor GTPase superfamily. Classic translation factor GTPase family. IF-2 subfamily. Post-translationally, this protein undergoes a protein self splicing that involves a post-translational excision of the intervening region (intein) followed by peptide ligation.

Function in general translation initiation by promoting the binding of the formylmethionine-tRNA to ribosomes. Seems to function along with eIF-2. The protein is Probable translation initiation factor IF-2 (infB) of Methanocaldococcus jannaschii (strain ATCC 43067 / DSM 2661 / JAL-1 / JCM 10045 / NBRC 100440) (Methanococcus jannaschii).